Reading from the N-terminus, the 199-residue chain is Small ribosomal subunit protein uS4B (199 aa).

The S4 RNA-binding domain occupies 88–151; sequence CRLDNLVYRT…RKNKIFIDNF (64 aa).

It belongs to the universal ribosomal protein uS4 family. As to quaternary structure, part of the 30S ribosomal subunit. Contacts protein S5. The interaction surface between S4 and S5 is involved in control of translational fidelity.

One of the primary rRNA binding proteins, it binds directly to 16S rRNA where it nucleates assembly of the body of the 30S subunit. Its function is as follows. With S5 and S12 plays an important role in translational accuracy. The sequence is that of Small ribosomal subunit protein uS4B from Alkaliphilus metalliredigens (strain QYMF).